A 109-amino-acid chain; its full sequence is Ferredoxin (109 aa).

4Fe-4S ferredoxin-type domains follow at residues 2-30 (TYVV…YEGE) and 31-60 (FMLV…PESP). Cysteine 9 and cysteine 17 together coordinate [3Fe-4S] cluster. Residues cysteine 21, cysteine 40, cysteine 43, and cysteine 46 each contribute to the [4Fe-4S] cluster site. Residue cysteine 50 coordinates [3Fe-4S] cluster.

Requires [4Fe-4S] cluster as cofactor. [3Fe-4S] cluster is required as a cofactor.

Its function is as follows. Ferredoxins are iron-sulfur proteins that transfer electrons in a wide variety of metabolic reactions. This chain is Ferredoxin (fdxA), found in Rickettsia felis (strain ATCC VR-1525 / URRWXCal2) (Rickettsia azadi).